We begin with the raw amino-acid sequence, 239 residues long: 2,3,4,5-tetrahydropyridine-2,6-dicarboxylate N-acetyltransferase (239 aa).

Belongs to the transferase hexapeptide repeat family. DapH subfamily.

The enzyme catalyses (S)-2,3,4,5-tetrahydrodipicolinate + acetyl-CoA + H2O = L-2-acetamido-6-oxoheptanedioate + CoA. Its pathway is amino-acid biosynthesis; L-lysine biosynthesis via DAP pathway; LL-2,6-diaminopimelate from (S)-tetrahydrodipicolinate (acetylase route): step 1/3. Its function is as follows. Catalyzes the transfer of an acetyl group from acetyl-CoA to tetrahydrodipicolinate. This Staphylococcus aureus (strain Newman) protein is 2,3,4,5-tetrahydropyridine-2,6-dicarboxylate N-acetyltransferase.